A 382-amino-acid polypeptide reads, in one-letter code: uncharacterized protein (382 aa).

Transmembrane regions (helical) follow at residues 14–34, 45–65, 79–99, 102–122, 131–151, 157–177, 204–224, 235–255, 270–290, 291–311, 325–345, and 348–368; these read GLLLLTLAIAVLNTLVPLWLA, VVSSSYFTGNLVGTLLTGYVI, FIFAAGCAGLGLMIGFWSWLA, FVAGIGCAMIWVVVESALMCS, LLAAYMMVYYVGTFLGQLLVS, LMSVLPWVTGLTLAGILPLLF, LGVNGCIISGIVLGSLYGLMP, ASIGFWMAVLVSAGILGQWPI, VQVFVVILGSIAMLSQAAMAP, ALFILGAAGFTLYPVAMAWAC, ALLLSYTVGSLLGPSFTAMLM, and FSDNLLFIMIASVSFIYLLML.

This sequence belongs to the major facilitator superfamily. YcaD (TC 2.A.1.26) family.

The protein resides in the cell inner membrane. This is an uncharacterized protein from Escherichia coli O6:K15:H31 (strain 536 / UPEC).